A 408-amino-acid polypeptide reads, in one-letter code: Multidrug resistance protein MdtG (408 aa).

The next 10 helical transmembrane spans lie at 13 to 33, 51 to 71, 89 to 109, 112 to 132, 138 to 158, 170 to 190, 221 to 241, 253 to 273, 287 to 307, and 375 to 395; these read LYIA…VMPF, LWSG…SPFW, LGMA…QFLL, AALG…AIQV, GWAL…GPLL, PVFF…FFFI, LFVT…ILTL, LAFI…LSAP, ILVA…FVQS, and AVFL…WLSL.

This sequence belongs to the major facilitator superfamily. DHA1 family. MdtG (TC 2.A.1.2.20) subfamily.

Its subcellular location is the cell inner membrane. The polypeptide is Multidrug resistance protein MdtG (Dickeya zeae (strain Ech586) (Dickeya dadantii (strain Ech586))).